The chain runs to 119 residues: Large ribosomal subunit protein uL22c (119 aa).

It belongs to the universal ribosomal protein uL22 family. As to quaternary structure, part of the 50S ribosomal subunit.

It localises to the plastid. The protein localises to the chloroplast. Functionally, this protein binds specifically to 23S rRNA. The globular domain of the protein is located near the polypeptide exit tunnel on the outside of the subunit, while an extended beta-hairpin is found that lines the wall of the exit tunnel in the center of the 70S ribosome. This chain is Large ribosomal subunit protein uL22c (rpl22), found in Anthoceros angustus (Hornwort).